The chain runs to 126 residues: uncharacterized protein (126 aa).

Positions Ile19–Ala126 constitute an HIT domain. The Histidine triad motif motif lies at His111 to His115.

This is an uncharacterized protein from Chlamydia muridarum (strain MoPn / Nigg).